The following is a 390-amino-acid chain: (S)-8-oxocitronellyl enol synthase CYC2 (390 aa).

NADP(+)-binding positions include 35-37 (TGI), 63-64 (RR), 81-82 (DI), 105-106 (TW), and Gln143. Active-site residues include Lys147 and Tyr179. Residues Lys147 and Tyr179 each contribute to the substrate site. NADP(+) is bound by residues Tyr179 and 213-215 (SMM).

It belongs to the short-chain dehydrogenases/reductases (SDR) family. Highly divergent.

It catalyses the reaction (S)-8-oxocitronellyl enol + NADP(+) = (6E)-8-oxogeranial + NADPH + H(+). The catalysed reaction is (S)-8-oxocitronellyl enol + NAD(+) = (6E)-8-oxogeranial + NADH + H(+). Its function is as follows. Iridoid synthase that catalyzes the first step in generation of the iridoid ring scaffold using the linear monoterpene (6E)-8-oxogeranial as substrate. Iridoids comprise a large family of distinctive bicyclic monoterpenes that possess a wide range of pharmacological activities, including anticancer, anti-inflammatory, antifungal and antibacterial activities. The chain is (S)-8-oxocitronellyl enol synthase CYC2 from Camptotheca acuminata (Happy tree).